Reading from the N-terminus, the 237-residue chain is Ubiquitin-conjugating enzyme E2 34 (237 aa).

Residues 5–162 (ACIKRLQKEY…FPEYVEKYNQ (158 aa)) form the UBC core domain. The active-site Glycyl thioester intermediate is C87. Positions 168–207 (QATTQLTTPESPQKSDTKVESEKTIDPTKGDSEGGLKERK) are disordered. A compositionally biased stretch (basic and acidic residues) spans 180-204 (QKSDTKVESEKTIDPTKGDSEGGLK). The helical transmembrane segment at 214–234 (LPAWIILLLVSVFGVVMALPL) threads the bilayer.

This sequence belongs to the ubiquitin-conjugating enzyme family.

The protein localises to the membrane. It catalyses the reaction S-ubiquitinyl-[E1 ubiquitin-activating enzyme]-L-cysteine + [E2 ubiquitin-conjugating enzyme]-L-cysteine = [E1 ubiquitin-activating enzyme]-L-cysteine + S-ubiquitinyl-[E2 ubiquitin-conjugating enzyme]-L-cysteine.. Its pathway is protein modification; protein ubiquitination. Functionally, accepts the ubiquitin from the E1 complex and catalyzes its covalent attachment to other proteins. In Arabidopsis thaliana (Mouse-ear cress), this protein is Ubiquitin-conjugating enzyme E2 34 (UBC34).